The sequence spans 347 residues: 3-isopropylmalate dehydrogenase (347 aa).

Substrate contacts are provided by R95, R105, R129, and D220. Residues D220, D244, and D248 each contribute to the Mg(2+) site. Residue 280–292 coordinates NAD(+); that stretch reads GSAPDIAGQGKAD.

Belongs to the isocitrate and isopropylmalate dehydrogenases family. LeuB type 2 subfamily. As to quaternary structure, homodimer. The cofactor is Mg(2+). Mn(2+) serves as cofactor.

The protein localises to the cytoplasm. The enzyme catalyses (2R,3S)-3-isopropylmalate + NAD(+) = 4-methyl-2-oxopentanoate + CO2 + NADH. The protein operates within amino-acid biosynthesis; L-leucine biosynthesis; L-leucine from 3-methyl-2-oxobutanoate: step 3/4. Its function is as follows. Catalyzes the oxidation of 3-carboxy-2-hydroxy-4-methylpentanoate (3-isopropylmalate) to 3-carboxy-4-methyl-2-oxopentanoate. The product decarboxylates to 4-methyl-2 oxopentanoate. This is 3-isopropylmalate dehydrogenase from Beutenbergia cavernae (strain ATCC BAA-8 / DSM 12333 / CCUG 43141 / JCM 11478 / NBRC 16432 / NCIMB 13614 / HKI 0122).